Reading from the N-terminus, the 278-residue chain is Orotidine 5'-phosphate decarboxylase (278 aa).

Substrate is bound by residues Asp40, 62–64, 93–102, Tyr228, and Arg246; these read KTH and DRKFIDIGNT. Catalysis depends on Lys95, which acts as the Proton donor.

It belongs to the OMP decarboxylase family.

It catalyses the reaction orotidine 5'-phosphate + H(+) = UMP + CO2. It functions in the pathway pyrimidine metabolism; UMP biosynthesis via de novo pathway; UMP from orotate: step 2/2. The sequence is that of Orotidine 5'-phosphate decarboxylase (PYR1) from Passalora fulva (Tomato leaf mold).